The primary structure comprises 156 residues: 3-hydroxyacyl-[acyl-carrier-protein] dehydratase FabZ (156 aa).

The active site involves histidine 61.

It belongs to the thioester dehydratase family. FabZ subfamily.

Its subcellular location is the cytoplasm. It carries out the reaction a (3R)-hydroxyacyl-[ACP] = a (2E)-enoyl-[ACP] + H2O. Its function is as follows. Involved in unsaturated fatty acids biosynthesis. Catalyzes the dehydration of short chain beta-hydroxyacyl-ACPs and long chain saturated and unsaturated beta-hydroxyacyl-ACPs. The polypeptide is 3-hydroxyacyl-[acyl-carrier-protein] dehydratase FabZ (Acaryochloris marina (strain MBIC 11017)).